The following is a 783-amino-acid chain: Cation/H(+) antiporter 10 (783 aa).

Helical transmembrane passes span 31 to 51, 61 to 81, 100 to 120, 135 to 155, 175 to 195, 206 to 226, 244 to 264, 276 to 295, 300 to 322, 356 to 376, 389 to 409, and 418 to 438; these read VVFGYSLPLLEIQIILIFFCI, IGISQIASYMIAGIVLGPQLF, IAALRCISVFGTLMFTFLMTV, VVIGIVSFFAPLFGLGFQNFF, AIVITQSSILLPSTTYILLEL, ALSACVINDILGIFSMIVASI, AVIIFFLVVFLVFKPMVQWVI, MYIHAVIITALASAAYFVFF, ILGPLMIGIIIPEGPPLGSALEA, IFFNIFLTFLILVIKLVACLA, LAVSFILSYKSFADFVLYEAV, and ATYSFLILYSLLNAGIVPTVL.

Belongs to the monovalent cation:proton antiporter 2 (CPA2) transporter (TC 2.A.37) family. CHX (TC 2.A.37.4) subfamily. In terms of tissue distribution, specifically expressed in pollen.

The protein localises to the membrane. Functionally, may operate as a cation/H(+) antiporter. This is Cation/H(+) antiporter 10 (CHX10) from Arabidopsis thaliana (Mouse-ear cress).